Consider the following 882-residue polypeptide: Protein translocase subunit SecA (882 aa).

Residues Q79, 97–101 (GEGKT), and D487 each bind ATP.

This sequence belongs to the SecA family.

It localises to the plastid. The protein localises to the chloroplast stroma. It is found in the chloroplast thylakoid membrane. It catalyses the reaction ATP + H2O + cellular proteinSide 1 = ADP + phosphate + cellular proteinSide 2.. In terms of biological role, has a central role in coupling the hydrolysis of ATP to the transfer of proteins across the thylakoid membrane. The protein is Protein translocase subunit SecA of Gracilaria tenuistipitata var. liui (Red alga).